We begin with the raw amino-acid sequence, 88 residues long: Exodeoxyribonuclease 7 small subunit (88 aa).

The interval 69-88 (ALAEEADPEDGASGADGGGA) is disordered.

It belongs to the XseB family. Heterooligomer composed of large and small subunits.

It is found in the cytoplasm. The catalysed reaction is Exonucleolytic cleavage in either 5'- to 3'- or 3'- to 5'-direction to yield nucleoside 5'-phosphates.. Functionally, bidirectionally degrades single-stranded DNA into large acid-insoluble oligonucleotides, which are then degraded further into small acid-soluble oligonucleotides. This Streptomyces coelicolor (strain ATCC BAA-471 / A3(2) / M145) protein is Exodeoxyribonuclease 7 small subunit.